The chain runs to 636 residues: Epithelial sodium channel subunit alpha (636 aa).

A disordered region spans residues 1 to 28 (MKSENQPEDKRIGKLKREANMQKMKEAA). Residues 1–77 (MKSENQPEDK…VCSKKNRMKT (77 aa)) lie on the Cytoplasmic side of the membrane. Residues 78-98 (AFWSILFFFTFGLMYWQFGII) traverse the membrane as a helical segment. Residues 99–549 (YREYFSFPVN…SQWSLWFGSS (451 aa)) lie on the Extracellular side of the membrane. Intrachain disulfides connect Cys-126-Cys-293, Cys-218-Cys-225, Cys-270-Cys-277, Cys-381-Cys-466, Cys-403-Cys-443, Cys-403-Cys-462, Cys-407-Cys-458, Cys-416-Cys-443, Cys-416-Cys-466, and Cys-418-Cys-432. Residues 550–570 (VLSVVELVELILDFIAITCIL) form a helical membrane-spanning segment. Over 571-636 (AIHWLNMNRS…LRRVSSQQTE (66 aa)) the chain is Cytoplasmic.

The protein belongs to the amiloride-sensitive sodium channel (TC 1.A.6) family. SCNN1A subfamily. Heterotrimer; containing an alpha/SCNN1A, a beta/SCNN1B and a gamma/SCNN1G subunit.

It is found in the apical cell membrane. Its subcellular location is the cell projection. The protein localises to the cilium. The protein resides in the cytoplasmic granule. It localises to the cytoplasm. It is found in the cytoplasmic vesicle. Its subcellular location is the secretory vesicle. The protein localises to the acrosome. The protein resides in the flagellum. The enzyme catalyses Na(+)(in) = Na(+)(out). With respect to regulation, originally identified and characterized by its inhibition by the diuretic drug amiloride. Functionally, this is one of the three pore-forming subunits of the heterotrimeric epithelial sodium channel (ENaC), a critical regulator of sodium balance and fluid homeostasis. ENaC operates in epithelial tissues, where it mediates the electrodiffusion of sodium ions from extracellular fluid through the apical membrane of cells, with water following osmotically. The polypeptide is Epithelial sodium channel subunit alpha (Anolis carolinensis (Green anole)).